Consider the following 286-residue polypeptide: MKMNPDDIRELRDRTGLGLSDCKKALEECDGDIKKAVDKLRTIGLAKADKKSDRVASDGLVAMCLTENCGVLIELNCETDFVARNEKFIELVLNLASIAHQERCTSVDELKNAKYESIGTVQEAIMNGTSVLGEKLELSKLCYLEAKDGVIAGYVHGDVCGLGKIGALIALQSPGDKAKLQEIGKQIAMHIVAMKPEALSIDDLDQMKLKNERSIIEEQVRSLNKPEEVAKKIVDGRMAKYYEEVVLLEQKFIKDDKMKVSDFIKSSEVSAVKLSNYKLLVLGGAN.

The interval 79 to 82 is involved in Mg(2+) ion dislocation from EF-Tu; that stretch reads TDFV.

It belongs to the EF-Ts family.

The protein resides in the cytoplasm. Associates with the EF-Tu.GDP complex and induces the exchange of GDP to GTP. It remains bound to the aminoacyl-tRNA.EF-Tu.GTP complex up to the GTP hydrolysis stage on the ribosome. This Wolbachia sp. subsp. Drosophila simulans (strain wRi) protein is Elongation factor Ts.